Here is a 1394-residue protein sequence, read N- to C-terminus: DNA-directed RNA polymerase subunit beta' (1394 aa).

4 residues coordinate Zn(2+): C71, C73, C86, and C89. The Mg(2+) site is built by D462, D464, and D466. C810, C884, C891, and C894 together coordinate Zn(2+).

The protein belongs to the RNA polymerase beta' chain family. As to quaternary structure, the RNAP catalytic core consists of 2 alpha, 1 beta, 1 beta' and 1 omega subunit. When a sigma factor is associated with the core the holoenzyme is formed, which can initiate transcription. Mg(2+) is required as a cofactor. It depends on Zn(2+) as a cofactor.

It catalyses the reaction RNA(n) + a ribonucleoside 5'-triphosphate = RNA(n+1) + diphosphate. Functionally, DNA-dependent RNA polymerase catalyzes the transcription of DNA into RNA using the four ribonucleoside triphosphates as substrates. This chain is DNA-directed RNA polymerase subunit beta', found in Caulobacter sp. (strain K31).